Reading from the N-terminus, the 56-residue chain is MVNLNKINSNSISNSIGNISSGNINNSIGNSSSSGCDDVFNNSTNNNNNNNNNNNK.

The interval 15-56 (SIGNISSGNINNSIGNSSSSGCDDVFNNSTNNNNNNNNNNNK) is disordered.

This is an uncharacterized protein from Dictyostelium discoideum (Social amoeba).